A 320-amino-acid polypeptide reads, in one-letter code: 3-ketodihydrosphingosine reductase TSC10 (320 aa).

Over 1–254 (MKFTLEDQVV…IIAKSLARGD (254 aa)) the chain is Cytoplasmic. L11 serves as a coordination point for NADP(+). NADPH-binding residues include G14, S16, and G18. The GXSXG motif lies at 14-18 (GGSQG). Residue L19 coordinates NADP(+). The NADPH site is built by R41, R45, D89, and L90. An NADP(+)-binding site is contributed by D89. The active-site Proton donor is S166. Positions 180, 184, and 213 each coordinate NADP(+). The Proton acceptor role is filled by Y180. Residue K184 is the Lowers pKa of active site Tyr of the active site. A helical transmembrane segment spans residues 255–275 (DDVFTDFVGWMIMGMDLGLTA). Topologically, residues 276-279 (KKSR) are lumenal. A helical transmembrane segment spans residues 280-300 (FVPLQWIFGVLSNILVVPFYM). Residues 301-320 (VGCSWYIRKWFRENDGKKAN) are Cytoplasmic-facing.

The protein belongs to the short-chain dehydrogenases/reductases (SDR) family. As to quaternary structure, dimer or tetramer.

The protein resides in the endoplasmic reticulum membrane. The enzyme catalyses sphinganine + NADP(+) = 3-oxosphinganine + NADPH + H(+). It participates in lipid metabolism; sphingolipid metabolism. Catalyzes the reduction of 3'-oxosphinganine (3-ketodihydrosphingosine/KDS) to sphinganine (dihydrosphingosine/DHS), the second step of de novo sphingolipid biosynthesis. The protein is 3-ketodihydrosphingosine reductase TSC10 of Saccharomyces cerevisiae (strain ATCC 204508 / S288c) (Baker's yeast).